A 67-amino-acid chain; its full sequence is Beta-defensin 1 (67 aa).

Positions 1-22 are cleaved as a signal peptide; it reads MRIHYLLFAVLFLFLMPVPGEG. Cystine bridges form between C33–C62, C40–C55, and C45–C63.

Monomer. Homodimer. As to expression, highly expressed in tongue, nasopharyngeal mucosa and skin, and to a lower extent in the Eustachian tube, lung and trachea.

The protein resides in the secreted. The protein localises to the membrane. Functionally, has antibacterial activity against Gram-positive bacterium S.pneumoniae Serotype 14. Is also active against Gram-negative bacteria M.catarrhalis 1857, and non-typeable H.influenzae strains 86-028NP and 1128. Has antifungal activity against C.albicans. May have a role in maintaining sterility in the middle ear. May act as a ligand for C-C chemokine receptor CCR6. Positively regulates the sperm motility and bactericidal activity in a CCR6-dependent manner. Binds to CCR6 and triggers Ca2+ mobilization in the sperm which is important for its motility. In Chinchilla lanigera (Long-tailed chinchilla), this protein is Beta-defensin 1 (DEFB1).